Consider the following 388-residue polypeptide: Protein phosphatase 2C 57 (388 aa).

The PPM-type phosphatase domain occupies 59 to 348 (RWGYTSVQGF…DNISIIIADL (290 aa)). Residues Asp93, Gly94, Asp296, and Asp339 each contribute to the Mn(2+) site. The chain crosses the membrane as a helical span at residues 363-383 (VVVELVQAATTIGLVTVGIWM).

It belongs to the PP2C family. Requires Mg(2+) as cofactor. Mn(2+) is required as a cofactor.

It is found in the membrane. Its subcellular location is the plastid. The protein localises to the chloroplast stroma. The catalysed reaction is O-phospho-L-seryl-[protein] + H2O = L-seryl-[protein] + phosphate. It carries out the reaction O-phospho-L-threonyl-[protein] + H2O = L-threonyl-[protein] + phosphate. In terms of biological role, protein phosphatase specifically required for efficient dephosphorylation of the light-harvesting complex II outer antennae (LCHII) and transition from state 2 to state 1. State transition plays a central role in response to environmental changes and allows to adjust to changing light conditions via the redistribution of light excitation energy between photosystem II (PSII) and photosystem I (PSI) in a short time by relocating LHCII proteins. Mainly responsible for the dephosphorylation of Lhcb1 and Lhcb2 but not of the photosystem II core proteins. This Arabidopsis thaliana (Mouse-ear cress) protein is Protein phosphatase 2C 57.